The primary structure comprises 798 residues: Interphotoreceptor matrix proteoglycan 1 (798 aa).

An N-terminal signal peptide occupies residues M1–G20. N142 is a glycosylation site (N-linked (GlcNAc...) asparagine). The SEA 1 domain maps to S238–L360. O-linked (GalNAc...) threonine glycans are attached at residues T442 and T445. One can recognise an SEA 2 domain in the interval H574 to Q687. N595 and N619 each carry an N-linked (GlcNAc...) asparagine glycan. Positions K624–R632 match the Heparin- and hyaluronan-binding motif. N-linked (GlcNAc...) asparagine glycosylation is found at N633 and N651. The disordered stretch occupies residues A741–N798. Over residues D786–N798 the composition is skewed to acidic residues.

Post-translationally, highly glycosylated (N- and O-linked carbohydrates and sialic acid).

The protein resides in the cell projection. The protein localises to the cilium. It localises to the photoreceptor outer segment. Its subcellular location is the secreted. It is found in the extracellular space. The protein resides in the extracellular matrix. The protein localises to the interphotoreceptor matrix. It localises to the photoreceptor inner segment. Chondroitin sulfate-, heparin- and hyaluronan-binding protein. May serve to form a basic macromolecular scaffold comprising the insoluble interphotoreceptor matrix. The polypeptide is Interphotoreceptor matrix proteoglycan 1 (Rattus norvegicus (Rat)).